Here is a 542-residue protein sequence, read N- to C-terminus: MNYVGLIIVLSCLWLGSNASDPDDPLLVQLPQGKLRGRDNGSYYSYESIPYAEPPTGDLRFEAPEPYKQKWSDIFDATKTPVACLQWDQFTPGANKLVGEEDCLTVSIYKPKNSKRSTFPVVAHIHGGAFMFGAAWQNGHENVMREGKFILVKISYRLGPLGFASTGDRDLPGNYGLKDQRLALKWIKQNIASFGGEPQNVLLIGHSAGGASVHLQMLREDFGQLAKAAFSFSGNALDPWVVQKGARGRAFELGRNVGCESAEDSASLKKCLKSKSASELVTAVRKFLIFSYVPFAPFSPVLEPSDAPDAILTQDPREVIKSGKFGQVPWAVSYVTEDGGYNAALLLKERKSGIVIDDLNDRWLELAPYFLFYRDTKTKKDMDDYSRKIKEDYLGNQKFDIESYSELQRLFTDILFKNSTQESLDLHRKYGKSPAYAYVYDNPAEKGIAQVLANRTDYDFGTVHGDDYFLIFENFVREVEMRPDEEIISRNFINMLADFASSDNGVLKYGECAFKNNVGSEKFQLLAIYIDGCQNRQHVEFP.

The signal sequence occupies residues 1–19 (MNYVGLIIVLSCLWLGSNA). N-linked (GlcNAc...) asparagine glycosylation occurs at asparagine 40. Cysteine 84 and cysteine 103 form a disulfide bridge. The active-site Acyl-ester intermediate is the serine 207. Cysteine 259 and cysteine 271 are joined by a disulfide. N-linked (GlcNAc...) asparagine glycosylation is found at asparagine 418 and asparagine 454. Histidine 464 functions as the Charge relay system in the catalytic mechanism. The cysteines at positions 512 and 533 are disulfide-linked.

The protein belongs to the type-B carboxylesterase/lipase family. In terms of assembly, monomer.

The protein localises to the secreted. The enzyme catalyses a carboxylic ester + H2O = an alcohol + a carboxylate + H(+). In terms of biological role, transferred from the ejaculatory bulbs of males to the female genitals upon copulation, plays an important role in the reproductive biology. The chain is Esterase 6 (Est-6) from Drosophila simulans (Fruit fly).